We begin with the raw amino-acid sequence, 463 residues long: Fumarate hydratase class II (463 aa).

Residues 98–100 (SGT), 129–132 (HPND), 139–141 (SSN), and threonine 187 each bind substrate. The interval 121-141 (KKGGKSPVHPNDHVNKGQSSN) is disordered. The active-site Proton donor/acceptor is the histidine 188. Residue serine 318 is part of the active site. Residues serine 319 and 324 to 326 (KVN) contribute to the substrate site.

Belongs to the class-II fumarase/aspartase family. Fumarase subfamily. In terms of assembly, homotetramer.

The protein resides in the cytoplasm. It catalyses the reaction (S)-malate = fumarate + H2O. It functions in the pathway carbohydrate metabolism; tricarboxylic acid cycle; (S)-malate from fumarate: step 1/1. In terms of biological role, involved in the TCA cycle. Catalyzes the stereospecific interconversion of fumarate to L-malate. The polypeptide is Fumarate hydratase class II (Rickettsia conorii (strain ATCC VR-613 / Malish 7)).